The chain runs to 149 residues: Protein SprT-like (149 aa).

The SprT-like domain occupies 4–143; it reads TDYVKQVSLE…CGLCRGKLLL (140 aa). Residue histidine 64 coordinates Zn(2+). Glutamate 65 is an active-site residue. Histidine 68 contacts Zn(2+).

It belongs to the SprT family. The cofactor is Zn(2+).

It is found in the cytoplasm. This is Protein SprT-like from Streptococcus pneumoniae (strain Taiwan19F-14).